A 273-amino-acid chain; its full sequence is Ribosomal RNA small subunit methyltransferase A (273 aa).

Asn-25, Leu-27, Gly-52, Glu-73, Asp-99, and Asn-118 together coordinate S-adenosyl-L-methionine.

This sequence belongs to the class I-like SAM-binding methyltransferase superfamily. rRNA adenine N(6)-methyltransferase family. RsmA subfamily.

The protein localises to the cytoplasm. It carries out the reaction adenosine(1518)/adenosine(1519) in 16S rRNA + 4 S-adenosyl-L-methionine = N(6)-dimethyladenosine(1518)/N(6)-dimethyladenosine(1519) in 16S rRNA + 4 S-adenosyl-L-homocysteine + 4 H(+). Its function is as follows. Specifically dimethylates two adjacent adenosines (A1518 and A1519) in the loop of a conserved hairpin near the 3'-end of 16S rRNA in the 30S particle. May play a critical role in biogenesis of 30S subunits. The protein is Ribosomal RNA small subunit methyltransferase A of Novosphingobium aromaticivorans (strain ATCC 700278 / DSM 12444 / CCUG 56034 / CIP 105152 / NBRC 16084 / F199).